Here is a 154-residue protein sequence, read N- to C-terminus: Superoxide dismutase [Cu-Zn] (154 aa).

The Cu cation site is built by His47, His49, and His64. Cys58 and Cys147 are joined by a disulfide. Residues His64, His72, His81, and Asp84 each contribute to the Zn(2+) site. His121 serves as a coordination point for Cu cation. Arg144 contacts substrate.

Belongs to the Cu-Zn superoxide dismutase family. As to quaternary structure, homodimer. It depends on Cu cation as a cofactor. Requires Zn(2+) as cofactor.

The protein resides in the cytoplasm. It catalyses the reaction 2 superoxide + 2 H(+) = H2O2 + O2. Functionally, destroys radicals which are normally produced within the cells and which are toxic to biological systems. In Eremothecium gossypii (strain ATCC 10895 / CBS 109.51 / FGSC 9923 / NRRL Y-1056) (Yeast), this protein is Superoxide dismutase [Cu-Zn] (SOD1).